A 370-amino-acid polypeptide reads, in one-letter code: Vasopressin V2 receptor (370 aa).

The segment covering 1 to 21 (MFMASTTSAVPWHLSQPTPAG) has biased composition (polar residues). The segment at 1 to 26 (MFMASTTSAVPWHLSQPTPAGNGSEG) is disordered. At 1–38 (MFMASTTSAVPWHLSQPTPAGNGSEGELLTARDPLLAQ) the chain is on the extracellular side. Asparagine 22 carries N-linked (GlcNAc...) asparagine glycosylation. Residues 39 to 63 (AELALLSTVFVAVALSNGLVLGALV) form a helical membrane-spanning segment. The Cytoplasmic segment spans residues 64–77 (RRGRRGRWAPMHVF). A helical membrane pass occupies residues 78-98 (IGHLCLADLAVALFQVLPQLA). Residues 99-113 (WDATDRFRGPDALCR) lie on the Extracellular side of the membrane. Residues 114–135 (AVKYLQMVGMYASSYMILAMTL) form a helical membrane-spanning segment. Over 136–159 (DRHRAICRPMLAHRHGGGTHWNRP) the chain is Cytoplasmic. The helical transmembrane segment at 160–180 (VLLAWAFSLLFSLPQLFIFAQ) threads the bilayer. The Extracellular portion of the chain corresponds to 181–199 (RDVDGSGVLDCWARFAEPW). Residues 200–219 (GLRAYVTWIALMVFVAPALG) traverse the membrane as a helical segment. The Cytoplasmic segment spans residues 220 to 270 (IAACQVLIFREIHASLGPGPVPRAGGPRRGCRPGSPAEGARVSAAVAKTVK). The helical transmembrane segment at 271–292 (MTLVIVIVYVLCWAPFFLVQLW) threads the bilayer. The Extracellular portion of the chain corresponds to 293-307 (AAWDPEAPREGPPFV). Residues 308–327 (LLMLLASLNSCTNPWIYASF) traverse the membrane as a helical segment. The Cytoplasmic segment spans residues 328–370 (SSSISSELRSLLCCTWRRAPPSPGPQEESCATASSFLAKDTPS). S-palmitoyl cysteine attachment occurs at residues cysteine 340 and cysteine 341. A disordered region spans residues 347–370 (PPSPGPQEESCATASSFLAKDTPS).

This sequence belongs to the G-protein coupled receptor 1 family. Vasopressin/oxytocin receptor subfamily. As to quaternary structure, interacts with ARRDC4. Identified in a complex containing at least ARRDC4, V2R and HGS. Interacts with TMEM147.

The protein resides in the cell membrane. Receptor for arginine vasopressin. The activity of this receptor is mediated by G proteins which activate adenylate cyclase. Involved in renal water reabsorption. The sequence is that of Vasopressin V2 receptor (AVPR2) from Bos taurus (Bovine).